Here is a 485-residue protein sequence, read N- to C-terminus: MRWKNKKIPEGEFMEMREEILQTWPTGKDVDLKESIDYLKKIPPEKNFAIKLEQADKEGITTAQPRAGVPLLDEHINLLQFLQDEGGADFLPSTIDAYTRQNRYEEGEAGIEASKKAGRSLMNGFPAVNWGVGPCRQVLEAVNLPLQARHGTPDARLLSEIIHAGGYTSNEGGGISYNVPYAKAVSIEHSIMCWQYADRLVGFYEENGVHLNREPFGPLTGTLVPPSVAIAVGVIEALLAAEQGVKSITVGYGMCGNMTQDVAAVISLREITKDYMKKFGYKDMCITTVFHQWMGGFPADESRAYGLISLGSTTAALSGATKVIVKTPHEAFGIPTKEANAGGIKATKMVLNLLKGQRYPDSRVLAQEIELIKAETKCIMDKVYEIGGGDLVEGTIKAFEAGVIDIPFAPSQYNAGKVMPARDNDGCIRYLMPGNLPFTKDILDFNRGKLEERAKADKREVDFQMSVDDVYAVSSGVLVGRPAKR.

An L-glutamate-binding site is contributed by arginine 66. Glycine 68 provides a ligand contact to adenosylcob(III)alamin. L-glutamate is bound at residue arginine 100. Adenosylcob(III)alamin is bound at residue asparagine 123. L-glutamate-binding positions include 149–150, glutamate 171, and tyrosine 177; that span reads RH. An adenosylcob(III)alamin-binding site is contributed by proline 180. Tyrosine 181 is a binding site for L-glutamate. Phenylalanine 297, lysine 326, glutamate 330, and isoleucine 334 together coordinate adenosylcob(III)alamin.

It belongs to the methylaspartate mutase GlmE subunit family. Heterotetramer composed of 2 epsilon subunits (GlmE) and 2 sigma subunits (GlmS). GlmE exists as a homodimer and GlmS as a monomer. It depends on adenosylcob(III)alamin as a cofactor.

The enzyme catalyses (2S,3S)-3-methyl-L-aspartate = L-glutamate. It participates in amino-acid degradation; L-glutamate degradation via mesaconate pathway; acetate and pyruvate from L-glutamate: step 1/4. In terms of biological role, catalyzes the carbon skeleton rearrangement of L-glutamate to L-threo-3-methylaspartate ((2S,3S)-3-methylaspartate). The polypeptide is Glutamate mutase epsilon subunit (Treponema denticola (strain ATCC 35405 / DSM 14222 / CIP 103919 / JCM 8153 / KCTC 15104)).